Reading from the N-terminus, the 312-residue chain is Homoserine O-succinyltransferase (312 aa).

C142 functions as the Acyl-thioester intermediate in the catalytic mechanism. Substrate is bound by residues K163 and S192. Residue H235 is the Proton acceptor of the active site. E237 is a catalytic residue. Substrate is bound at residue R249.

Belongs to the MetA family.

The protein resides in the cytoplasm. It carries out the reaction L-homoserine + succinyl-CoA = O-succinyl-L-homoserine + CoA. It functions in the pathway amino-acid biosynthesis; L-methionine biosynthesis via de novo pathway; O-succinyl-L-homoserine from L-homoserine: step 1/1. Transfers a succinyl group from succinyl-CoA to L-homoserine, forming succinyl-L-homoserine. This Alteromonas mediterranea (strain DSM 17117 / CIP 110805 / LMG 28347 / Deep ecotype) protein is Homoserine O-succinyltransferase.